A 393-amino-acid polypeptide reads, in one-letter code: MKPPVNQSCQHYPECAGCDRLHIGYEKQLQHKQEEIEKRFKGFKGLEIRQIIKSPKDQMYRHKVQLPFGHRKIGKKSVLTLGLHNKENTFIIDQKECRIQDEDLTTVAAAIRHWARNENLEPYHEKKGSGLLRHIVLRKANATQEILVGIVTNESEIPGRKKLTDRLYSYIQQFLYKENSKADVVGILQNVNRKNTKVVLGEKEVTWYGRHFVKEKIGKLDFQIGLSTFFQVNPFQIENLYNLILEDLPENKCVVDAYCGIGTISLYIASKSKKVIGLEENSSSIRSAIGASKANGIENVHFIKGKVLDTLRAALNENSDVVVLDPPREGLDAETKSILLNSKVNQILYVSCNPETLLRDAIELTKSFKYEKITPVDLFPHTSHLESVSVFTK.

Residues Cys9, Cys15, Cys18, and Cys97 each contribute to the [4Fe-4S] cluster site. Gln231, Tyr258, Glu279, and Asp325 together coordinate S-adenosyl-L-methionine. Cys352 serves as the catalytic Nucleophile.

It belongs to the class I-like SAM-binding methyltransferase superfamily. RNA M5U methyltransferase family.

This is an uncharacterized protein from Leptospira interrogans serogroup Icterohaemorrhagiae serovar Lai (strain 56601).